Consider the following 194-residue polypeptide: Recombination protein RecR (194 aa).

The C4-type zinc-finger motif lies at 52–67 (CTECRTFTEEEVCHIC). The region spanning 76–171 (GQICVVESPA…EASRIAHGVP (96 aa)) is the Toprim domain.

The protein belongs to the RecR family.

Its function is as follows. May play a role in DNA repair. It seems to be involved in an RecBC-independent recombinational process of DNA repair. It may act with RecF and RecO. This Vibrio campbellii (strain ATCC BAA-1116) protein is Recombination protein RecR.